We begin with the raw amino-acid sequence, 231 residues long: Ion-translocating oxidoreductase complex subunit E (231 aa).

6 consecutive transmembrane segments (helical) span residues 18–38 (GLVQ…VTNA), 39–59 (LGLG…VSLV), 69–89 (IPVF…LINA), 93–113 (GLYL…VIIG), 128–148 (AFDG…LGAG), and 182–202 (PFLL…LIAG).

Belongs to the NqrDE/RnfAE family. As to quaternary structure, the complex is composed of six subunits: RnfA, RnfB, RnfC, RnfD, RnfE and RnfG.

The protein resides in the cell inner membrane. Its function is as follows. Part of a membrane-bound complex that couples electron transfer with translocation of ions across the membrane. This chain is Ion-translocating oxidoreductase complex subunit E, found in Shewanella denitrificans (strain OS217 / ATCC BAA-1090 / DSM 15013).